The following is a 224-amino-acid chain: UPF0758 protein lwe1562 (224 aa).

An MPN domain is found at 102 to 224 (VIRCPDDAVK…YISLKEKGYF (123 aa)). Zn(2+) is bound by residues His-173, His-175, and Asp-186. Residues 173–186 (HNHPSGDPTPSSED) carry the JAMM motif motif.

Belongs to the UPF0758 family.

This is UPF0758 protein lwe1562 from Listeria welshimeri serovar 6b (strain ATCC 35897 / DSM 20650 / CCUG 15529 / CIP 8149 / NCTC 11857 / SLCC 5334 / V8).